Here is a 153-residue protein sequence, read N- to C-terminus: MYSDKVFDHFQNPRNVGKIEDADGVGTVGNPVCGDLMTIYIKVKDNRIEDIKFQTFGCAAAIATSSMATEMAKGKTIEEALKITRDAVAEALGGLPKQKMHCSNLAADALRRAIVDYFRKNGKIDKIKELGLEKELEKMEKGEMDDHGEYCEA.

The [2Fe-2S] cluster site is built by Cys33, Cys58, His101, and Cys102.

It belongs to the NifU family. As to quaternary structure, forms a heterotetramer with IscS2.

Functionally, a scaffold on which IscS assembles Fe-S clusters. Subsequently gives the nascent cluster to other proteins. It is likely that Fe-S cluster coordination is flexible as the role of this complex is to build and then hand off Fe-S clusters. In Archaeoglobus fulgidus (strain ATCC 49558 / DSM 4304 / JCM 9628 / NBRC 100126 / VC-16), this protein is Iron-sulfur cluster assembly scaffold protein IscU 1 (iscU1).